Consider the following 549-residue polypeptide: Copalyl diphosphate synthase (549 aa).

Residues 321–326 (DADDTA) carry the DXDDTA motif motif. Residues 451-457 (QRDDGSW) carry the QXXDGSW motif motif.

This sequence belongs to the terpene synthase family. The cofactor is Mg(2+).

The catalysed reaction is (2E,6E,10E)-geranylgeranyl diphosphate = (+)-copalyl diphosphate. Functionally, involved in the biosynthesis of the labdane-type bicyclic diterpene labda-8(17),12(E),14-triene. Catalyzes the conversion of geranylgeranyl diphosphate (GGDP) into (+)-copalyl diphosphate. In Streptomyces anulatus (Streptomyces chrysomallus), this protein is Copalyl diphosphate synthase.